The following is a 376-amino-acid chain: ORC1-type DNA replication protein 2 (376 aa).

ATP contacts are provided by residues 73–77 (TGKTS), Tyr-209, and Arg-221.

The protein belongs to the CDC6/cdc18 family.

Functionally, involved in regulation of DNA replication. This chain is ORC1-type DNA replication protein 2 (cdc6-2), found in Archaeoglobus fulgidus (strain ATCC 49558 / DSM 4304 / JCM 9628 / NBRC 100126 / VC-16).